Reading from the N-terminus, the 132-residue chain is L-ectoine synthase (132 aa).

This sequence belongs to the ectoine synthase family.

It carries out the reaction (2S)-4-acetamido-2-aminobutanoate = L-ectoine + H2O. It participates in amine and polyamine biosynthesis; ectoine biosynthesis; L-ectoine from L-aspartate 4-semialdehyde: step 3/3. Catalyzes the circularization of gamma-N-acetyl-alpha,gamma-diaminobutyric acid (ADABA) to ectoine (1,4,5,6-tetrahydro-2-methyl-4-pyrimidine carboxylic acid), which is an excellent osmoprotectant. This is L-ectoine synthase from Rhodococcus opacus (strain B4).